The sequence spans 117 residues: Large ribosomal subunit protein uL18 (117 aa).

Belongs to the universal ribosomal protein uL18 family. As to quaternary structure, part of the 50S ribosomal subunit; part of the 5S rRNA/L5/L18/L25 subcomplex. Contacts the 5S and 23S rRNAs.

This is one of the proteins that bind and probably mediate the attachment of the 5S RNA into the large ribosomal subunit, where it forms part of the central protuberance. The chain is Large ribosomal subunit protein uL18 from Enterobacter sp. (strain 638).